Here is a 424-residue protein sequence, read N- to C-terminus: Serine--tRNA ligase (424 aa).

229-231 lines the L-serine pocket; that stretch reads TAE. Residues 260–262 and valine 276 each bind ATP; that span reads RTE. Residue glutamate 283 participates in L-serine binding. 347 to 350 contributes to the ATP binding site; it reads EVTS. Position 382 (threonine 382) interacts with L-serine.

This sequence belongs to the class-II aminoacyl-tRNA synthetase family. Type-1 seryl-tRNA synthetase subfamily. Homodimer. The tRNA molecule binds across the dimer.

The protein localises to the cytoplasm. It carries out the reaction tRNA(Ser) + L-serine + ATP = L-seryl-tRNA(Ser) + AMP + diphosphate + H(+). It catalyses the reaction tRNA(Sec) + L-serine + ATP = L-seryl-tRNA(Sec) + AMP + diphosphate + H(+). It functions in the pathway aminoacyl-tRNA biosynthesis; selenocysteinyl-tRNA(Sec) biosynthesis; L-seryl-tRNA(Sec) from L-serine and tRNA(Sec): step 1/1. In terms of biological role, catalyzes the attachment of serine to tRNA(Ser). Is also able to aminoacylate tRNA(Sec) with serine, to form the misacylated tRNA L-seryl-tRNA(Sec), which will be further converted into selenocysteinyl-tRNA(Sec). The polypeptide is Serine--tRNA ligase (Rubrobacter xylanophilus (strain DSM 9941 / JCM 11954 / NBRC 16129 / PRD-1)).